The chain runs to 447 residues: Argininosuccinate synthase (447 aa).

ATP contacts are provided by residues 17–25 (AFSGGLDTS) and alanine 43. An L-citrulline-binding site is contributed by tyrosine 99. The ATP site is built by glycine 129 and threonine 131. L-aspartate-binding residues include threonine 131, asparagine 135, and aspartate 136. Asparagine 135 contributes to the L-citrulline binding site. An ATP-binding site is contributed by aspartate 136. Residues arginine 139 and serine 192 each coordinate L-citrulline. Aspartate 194 contacts ATP. The L-citrulline site is built by threonine 201, glutamate 203, and glutamate 280.

The protein belongs to the argininosuccinate synthase family. Type 2 subfamily. Homotetramer.

It localises to the cytoplasm. It catalyses the reaction L-citrulline + L-aspartate + ATP = 2-(N(omega)-L-arginino)succinate + AMP + diphosphate + H(+). Its pathway is amino-acid biosynthesis; L-arginine biosynthesis; L-arginine from L-ornithine and carbamoyl phosphate: step 2/3. The polypeptide is Argininosuccinate synthase (Escherichia coli O139:H28 (strain E24377A / ETEC)).